A 77-amino-acid chain; its full sequence is UPF0213 protein VNG_2274C (77 aa).

Residues 1-75 (MHHVYVIECS…KQLSRAQKEA (75 aa)) form the GIY-YIG domain.

This sequence belongs to the UPF0213 family.

The protein is UPF0213 protein VNG_2274C of Halobacterium salinarum (strain ATCC 700922 / JCM 11081 / NRC-1) (Halobacterium halobium).